A 505-amino-acid chain; its full sequence is ATP synthase subunit alpha (505 aa).

169–176 (GDRQTGKT) is a binding site for ATP.

Belongs to the ATPase alpha/beta chains family. F-type ATPases have 2 components, CF(1) - the catalytic core - and CF(0) - the membrane proton channel. CF(1) has five subunits: alpha(3), beta(3), gamma(1), delta(1), epsilon(1). CF(0) has three main subunits: a(1), b(2) and c(9-12). The alpha and beta chains form an alternating ring which encloses part of the gamma chain. CF(1) is attached to CF(0) by a central stalk formed by the gamma and epsilon chains, while a peripheral stalk is formed by the delta and b chains.

The protein localises to the cell membrane. It carries out the reaction ATP + H2O + 4 H(+)(in) = ADP + phosphate + 5 H(+)(out). Functionally, produces ATP from ADP in the presence of a proton gradient across the membrane. The alpha chain is a regulatory subunit. This chain is ATP synthase subunit alpha, found in Alkaliphilus metalliredigens (strain QYMF).